Reading from the N-terminus, the 558-residue chain is MARVEL domain-containing protein 2 (558 aa).

The span at 1–16 shows a compositional bias: basic and acidic residues; it reads MSNDGRSRNRDRRYDE. 2 disordered regions span residues 1–58 and 115–145; these read MSND…PPFG and CSPP…GTFS. Residues 1 to 194 lie on the Cytoplasmic side of the membrane; it reads MSNDGRSRNR…YMKSWAGLLR (194 aa). Pro residues predominate over residues 45–58; it reads PLPPPPLPLQPPFG. Residues Ser116, Ser120, and Ser161 each carry the phosphoserine modification. Thr166 bears the Phosphothreonine mark. In terms of domain architecture, MARVEL spans 188 to 367; it reads SWAGLLRILG…SALVCLKLWR (180 aa). The helical transmembrane segment at 195–215 threads the bilayer; that stretch reads ILGVVELLLGAGVFACVTAYI. Residues 216–223 lie on the Extracellular side of the membrane; that stretch reads HKDSEWYN. A helical membrane pass occupies residues 224–244; it reads LFGYSQPYGMGGVGGLGSMYG. The Cytoplasmic portion of the chain corresponds to 245–254; the sequence is GYYYTGPKTP. Residues 255-275 form a helical membrane-spanning segment; that stretch reads FVLVVAGLAWITTIIILVLGM. The Extracellular portion of the chain corresponds to 276-291; the sequence is SMYYRTILLDSNWWPL. Residues 292-312 form a helical membrane-spanning segment; it reads TEFGINVALFILYMAAAIVYV. Topologically, residues 313 to 319 are cytoplasmic; the sequence is NDTNRGG. The helical transmembrane segment at 320–337 threads the bilayer; sequence LCYYPLFNTPVNAVFCRV. At 338-341 the chain is on the extracellular side; that stretch reads EGGQ. The chain crosses the membrane as a helical span at residues 342 to 362; the sequence is IAAMIFLFVTMIVYLISALVC. The Cytoplasmic segment spans residues 363–558; it reads LKLWRHEAAR…VMNWDVQGYS (196 aa). At Ser387 the chain carries Phosphoserine. A Glycyl lysine isopeptide (Lys-Gly) (interchain with G-Cter in ubiquitin) cross-link involves residue Lys412. Residues 439-548 adopt a coiled-coil conformation; sequence MPDYVAKYPV…IKQRIQEYDK (110 aa). One can recognise an OCEL domain in the interval 440 to 551; that stretch reads PDYVAKYPVI…RIQEYDKVMN (112 aa).

It belongs to the ELL/occludin family. Interacts with TJP1. Interacts with the ubiquitin ligase ITCH. Interacts (via C-terminal cytoplasmic domain) with LSR (via the cytoplasmic domain), ILDR1 and ILDR2; the interaction is required to recruit MARVELD2 to tricellular contacts. In terms of processing, ubiquitinated by ITCH; but this ubiquitination does not lead to proteasomal degradation. Polyubiquitinated at Lys-412 via 'Lys-63'-linked ubiquitin chains; deubiquitinated by USP53. Post-translationally, phosphorylated.

The protein localises to the cell membrane. It localises to the cell junction. It is found in the tight junction. Its function is as follows. Plays a role in the formation of tricellular tight junctions and of epithelial barriers. Required for normal hearing via its role in the separation of the endolymphatic and perilymphatic spaces of the organ of Corti in the inner ear, and for normal survival of hair cells in the organ of Corti. This is MARVEL domain-containing protein 2 from Homo sapiens (Human).